Consider the following 193-residue polypeptide: MTETLETPASKIVPRLKTKYADSIKSTLIEEFKYENVNQVPRLVKVVVNMGVGDAAKDSKLIDGAVRDLTLITGQKPQVTKARKSIAQFKLREGMPIGAHATLRGDRMWEFLDRLVTLALPRIRDFRGLSGKQFDGNGNYTFGLTEQVMFHEIDQDSIDRVRGMDITVVTTAKTDDEGRALLKALGFPFKTEA.

It belongs to the universal ribosomal protein uL5 family. In terms of assembly, part of the 50S ribosomal subunit; part of the 5S rRNA/L5/L18/L25 subcomplex. Contacts the 5S rRNA and the P site tRNA. Forms a bridge to the 30S subunit in the 70S ribosome.

This is one of the proteins that bind and probably mediate the attachment of the 5S RNA into the large ribosomal subunit, where it forms part of the central protuberance. In the 70S ribosome it contacts protein S13 of the 30S subunit (bridge B1b), connecting the 2 subunits; this bridge is implicated in subunit movement. Contacts the P site tRNA; the 5S rRNA and some of its associated proteins might help stabilize positioning of ribosome-bound tRNAs. This chain is Large ribosomal subunit protein uL5, found in Arthrobacter sp. (strain FB24).